The following is a 513-amino-acid chain: Tyrosine-protein phosphatase non-receptor type substrate 1 (513 aa).

An N-terminal signal peptide occupies residues M1–G31. The region spanning K32–S137 is the Ig-like V-type domain. Over K32–N373 the chain is Extracellular. Residues N54, N92, N168, N180, N205, N209, N246, N271, N293, N302, N312, N320, N345, and N367 are each glycosylated (N-linked (GlcNAc...) asparagine). A disulfide bridge connects residues C55 and C121. Ig-like C1-type domains are found at residues P149 to S248 and P255 to T343. A disulfide bridge connects residues C171 and C229. A disulfide bridge links C274 with C332. A helical transmembrane segment spans residues V374–Y394. The Cytoplasmic portion of the chain corresponds to L395–Q511. At Y440 the chain carries Phosphotyrosine; by Tyr-kinases. An SH2-binding motif is present at residues Y440–L443. The interval N444–K513 is disordered. The SH3-binding signature appears at K450–A455. Y464, Y481, and Y505 each carry phosphotyrosine; by Tyr-kinases. 3 short sequence motifs (SH2-binding) span residues Y464–I467, Y481–L484, and Y505–V508. Positions E504–K513 are enriched in polar residues.

As to quaternary structure, binds PTPN11 when tyrosine-phosphorylated, except in macrophages, where it primarily binds PTPN6. Binds GRB2 vitro. Binds FGR. Binds JAK2 irrespective of its phosphorylation status and forms a stable complex. Binds SCAP1 and/or SCAP2. The resulting complex recruits FYB1. Binds PTK2B. Interacts with TRIM2. In terms of processing, N-glycosylated. Phosphorylated on tyrosine residues. As to expression, highly expressed in cerebral cortex, brain, spinal cord, cerebellum and spleen, and at much lower levels in kidney, thymus, heart, lung and liver. Within the cerebellum, highly expressed throughout the molecular layer, and in synaptic glomeruli in the granule cell layer. Detected in neurons of the hippocampus and dentate gyrus, and in olfactory bulb. Not detected in Purkinje cells. Highly expressed in the plexiform layers, optic fiber layer and the outer segments of the photoreceptor layer in the retina. Highly expressed in macrophages. Isoform 3 is detected at very low levels in all tissues tested.

The protein resides in the membrane. Immunoglobulin-like cell surface receptor for CD47. Acts as a docking protein and induces translocation of PTPN6, PTPN11 and other binding partners from the cytosol to the plasma membrane. Supports adhesion of cerebellar neurons, neurite outgrowth and glial cell attachment. May play a key role in intracellular signaling during synaptogenesis and in synaptic function. Involved in the negative regulation of receptor tyrosine kinase-coupled cellular responses induced by cell adhesion, growth factors or insulin. Mediates negative regulation of phagocytosis, mast cell activation and dendritic cell activation. CD47 binding prevents maturation of immature dendritic cells and inhibits cytokine production by mature dendritic cells. Plays a role in antiviral immunity and limits new world arenavirus infection by decreasing virus internalization. Receptor for THBS1. Interaction with THBS1 stimulates phosphorylation of SIRPA. In response to THBS1, involved in ROS signaling in non-phagocytic cells, stimulating NADPH oxidase-derived ROS production. The protein is Tyrosine-protein phosphatase non-receptor type substrate 1 (Sirpa) of Mus musculus (Mouse).